We begin with the raw amino-acid sequence, 460 residues long: Phosphoglucomutase (460 aa).

The Phosphoserine intermediate role is filled by serine 103. Serine 103 serves as a coordination point for Mg(2+). Residues serine 103–histidine 104 and lysine 113 contribute to the substrate site. Mg(2+)-binding residues include aspartate 239, aspartate 241, and aspartate 243. Residues aspartate 243–arginine 244, threonine 303, and glutamate 322–serine 324 each bind substrate.

Belongs to the phosphohexose mutase family. Mg(2+) is required as a cofactor.

The protein resides in the cytoplasm. The catalysed reaction is alpha-D-glucose 1-phosphate = alpha-D-glucose 6-phosphate. Its function is as follows. This enzyme participates in both the breakdown and synthesis of glucose. The protein is Phosphoglucomutase (pgm) of Neisseria gonorrhoeae.